The following is a 600-amino-acid chain: UvrABC system protein C (600 aa).

The 86-residue stretch at 15–100 (NSAGVYQYFN…IKQLHPKYNI (86 aa)) folds into the GIY-YIG domain. Positions 203–238 (SILIKNLEKQMLVLAQNENYEEAAKVRDQIVTIKDL) constitute a UVR domain.

This sequence belongs to the UvrC family. Interacts with UvrB in an incision complex.

Its subcellular location is the cytoplasm. The UvrABC repair system catalyzes the recognition and processing of DNA lesions. UvrC both incises the 5' and 3' sides of the lesion. The N-terminal half is responsible for the 3' incision and the C-terminal half is responsible for the 5' incision. This Campylobacter jejuni subsp. jejuni serotype O:23/36 (strain 81-176) protein is UvrABC system protein C.